A 227-amino-acid chain; its full sequence is Extracellular small neutral protease (227 aa).

The N-terminal stretch at 1–29 (MRITLPLLSTAVGLGLTAAVLGTGPAATA) is a signal peptide. The propeptide occupies 30-42 (AAPQEPVRAAQLG). The Ca(2+) site is built by aspartate 156 and threonine 158. Zn(2+) is bound at residue histidine 163. Residue glutamate 164 is part of the active site. Zn(2+) contacts are provided by histidine 167 and aspartate 173. A disulfide bridge connects residues cysteine 179 and cysteine 192.

This sequence belongs to the peptidase M7 family. Requires Ca(2+) as cofactor. Zn(2+) serves as cofactor. In terms of processing, the N-terminus is blocked.

The protein localises to the secreted. The enzyme catalyses Hydrolyzes proteins with a preference for Tyr or Phe in the P1' position. Has no action on amino-acid p-nitroanilides.. The sequence is that of Extracellular small neutral protease (snpA) from Streptomyces lividans.